The sequence spans 687 residues: Elongation factor G (687 aa).

A tr-type G domain is found at 8-282 (NKFRNIGIMA…AVLAYLPSPL (275 aa)). GTP contacts are provided by residues 17-24 (AHIDAGKT), 81-85 (DTPGH), and 135-138 (NKMD).

Belongs to the TRAFAC class translation factor GTPase superfamily. Classic translation factor GTPase family. EF-G/EF-2 subfamily.

The protein localises to the cytoplasm. Functionally, catalyzes the GTP-dependent ribosomal translocation step during translation elongation. During this step, the ribosome changes from the pre-translocational (PRE) to the post-translocational (POST) state as the newly formed A-site-bound peptidyl-tRNA and P-site-bound deacylated tRNA move to the P and E sites, respectively. Catalyzes the coordinated movement of the two tRNA molecules, the mRNA and conformational changes in the ribosome. This is Elongation factor G from Clostridium novyi (strain NT).